Here is a 277-residue protein sequence, read N- to C-terminus: 4-hydroxy-tetrahydrodipicolinate reductase (277 aa).

Residues Gly-11–Met-16 and Gly-110–Thr-112 each bind NAD(+). His-166 (proton donor/acceptor) is an active-site residue. His-167 contributes to the (S)-2,3,4,5-tetrahydrodipicolinate binding site. Lys-170 serves as the catalytic Proton donor. Residue Gly-176–Thr-177 coordinates (S)-2,3,4,5-tetrahydrodipicolinate.

It belongs to the DapB family.

The protein localises to the cytoplasm. The enzyme catalyses (S)-2,3,4,5-tetrahydrodipicolinate + NAD(+) + H2O = (2S,4S)-4-hydroxy-2,3,4,5-tetrahydrodipicolinate + NADH + H(+). It catalyses the reaction (S)-2,3,4,5-tetrahydrodipicolinate + NADP(+) + H2O = (2S,4S)-4-hydroxy-2,3,4,5-tetrahydrodipicolinate + NADPH + H(+). Its pathway is amino-acid biosynthesis; L-lysine biosynthesis via DAP pathway; (S)-tetrahydrodipicolinate from L-aspartate: step 4/4. In terms of biological role, catalyzes the conversion of 4-hydroxy-tetrahydrodipicolinate (HTPA) to tetrahydrodipicolinate. This Synechococcus sp. (strain CC9605) protein is 4-hydroxy-tetrahydrodipicolinate reductase.